Consider the following 130-residue polypeptide: Large ribosomal subunit protein bL20 (130 aa).

Belongs to the bacterial ribosomal protein bL20 family.

In terms of biological role, binds directly to 23S ribosomal RNA and is necessary for the in vitro assembly process of the 50S ribosomal subunit. It is not involved in the protein synthesizing functions of that subunit. The protein is Large ribosomal subunit protein bL20 of Salinispora tropica (strain ATCC BAA-916 / DSM 44818 / JCM 13857 / NBRC 105044 / CNB-440).